Reading from the N-terminus, the 169-residue chain is Cell division inhibitor SulA (169 aa).

The tract at residues 106-112 (ALRTGNY) is ftsZ binding. Residues 162–169 (KIHSNLYH) are lon protease binding.

This sequence belongs to the SulA family. In terms of assembly, interacts with FtsZ. Is rapidly cleaved and degraded by the Lon protease once DNA damage is repaired.

Its function is as follows. Component of the SOS system and an inhibitor of cell division. Accumulation of SulA causes rapid cessation of cell division and the appearance of long, non-septate filaments. In the presence of GTP, binds a polymerization-competent form of FtsZ in a 1:1 ratio, thus inhibiting FtsZ polymerization and therefore preventing it from participating in the assembly of the Z ring. This mechanism prevents the premature segregation of damaged DNA to daughter cells during cell division. The sequence is that of Cell division inhibitor SulA from Salmonella agona (strain SL483).